Consider the following 529-residue polypeptide: Peptide chain release factor 3 (529 aa).

The tr-type G domain occupies 11–280 (NSRRTFAIIS…AFINWAPEPK (270 aa)). Residues 20-27 (SHPDAGKT), 88-92 (DTPGH), and 142-145 (NKMD) contribute to the GTP site.

It belongs to the TRAFAC class translation factor GTPase superfamily. Classic translation factor GTPase family. PrfC subfamily.

It localises to the cytoplasm. Functionally, increases the formation of ribosomal termination complexes and stimulates activities of RF-1 and RF-2. It binds guanine nucleotides and has strong preference for UGA stop codons. It may interact directly with the ribosome. The stimulation of RF-1 and RF-2 is significantly reduced by GTP and GDP, but not by GMP. This chain is Peptide chain release factor 3, found in Acinetobacter baylyi (strain ATCC 33305 / BD413 / ADP1).